The sequence spans 211 residues: Interleukin-6 (211 aa).

The signal sequence occupies residues 1–29 (MNSLSTSAFSPVAFSLGLLLVMATAFPTP). The cysteines at positions 71 and 77 are disulfide-linked. The residue at position 80 (Ser-80) is a Phosphoserine. Cys-100 and Cys-110 form a disulfide bridge.

Belongs to the IL-6 superfamily. In terms of assembly, component of a hexamer of two molecules each of IL6, IL6R and IL6ST; first binds to IL6R to associate with the signaling subunit IL6ST. Interacts with IL6R (via the N-terminal ectodomain); this interaction may be affected by IL6R-binding with SORL1, hence decreasing IL6 cis signaling. Interacts with SORL1 (via the N-terminal ectodomain); this interaction leads to IL6 internalization and lysosomal degradation. May form a trimeric complex with the soluble SORL1 ectodomain and soluble IL6R receptor; this interaction might stabilize circulating IL6, hence promoting IL6 trans signaling.

The protein resides in the secreted. In terms of biological role, cytokine with a wide variety of biological functions in immunity, tissue regeneration, and metabolism. Binds to IL6R, then the complex associates to the signaling subunit IL6ST/gp130 to trigger the intracellular IL6-signaling pathway. The interaction with the membrane-bound IL6R and IL6ST stimulates 'classic signaling', whereas the binding of IL6 and soluble IL6R to IL6ST stimulates 'trans-signaling'. Alternatively, 'cluster signaling' occurs when membrane-bound IL6:IL6R complexes on transmitter cells activate IL6ST receptors on neighboring receiver cells. Functionally, IL6 is a potent inducer of the acute phase response. Rapid production of IL6 contributes to host defense during infection and tissue injury, but excessive IL6 synthesis is involved in disease pathology. In the innate immune response, is synthesized by myeloid cells, such as macrophages and dendritic cells, upon recognition of pathogens through toll-like receptors (TLRs) at the site of infection or tissue injury. In the adaptive immune response, is required for the differentiation of B cells into immunoglobulin-secreting cells. Plays a major role in the differentiation of CD4(+) T cell subsets. Essential factor for the development of T follicular helper (Tfh) cells that are required for the induction of germinal-center formation. Required to drive naive CD4(+) T cells to the Th17 lineage. Also required for proliferation of myeloma cells and the survival of plasmablast cells. Acts as an essential factor in bone homeostasis and on vessels directly or indirectly by induction of VEGF, resulting in increased angiogenesis activity and vascular permeability. Induces, through 'trans-signaling' and synergistically with IL1B and TNF, the production of VEGF. Involved in metabolic controls, is discharged into the bloodstream after muscle contraction increasing lipolysis and improving insulin resistance. 'Trans-signaling' in central nervous system also regulates energy and glucose homeostasis. Mediates, through GLP-1, crosstalk between insulin-sensitive tissues, intestinal L cells and pancreatic islets to adapt to changes in insulin demand. Also acts as a myokine. Plays a protective role during liver injury, being required for maintenance of tissue regeneration. Also has a pivotal role in iron metabolism by regulating HAMP/hepcidin expression upon inflammation or bacterial infection. Through activation of IL6ST-YAP-NOTCH pathway, induces inflammation-induced epithelial regeneration. This is Interleukin-6 (IL6) from Camelus bactrianus (Bactrian camel).